A 546-amino-acid chain; its full sequence is Chaperonin GroEL (546 aa).

ATP is bound by residues 30-33, K51, 87-91, G415, 479-481, and D495; these read TLGP, DGTTT, and NAA. Positions 526–546 are disordered; that stretch reads KKGDSAPAGGGMGDMGGMGMM. Over residues 533-546 the composition is skewed to gly residues; the sequence is AGGGMGDMGGMGMM.

It belongs to the chaperonin (HSP60) family. Forms a cylinder of 14 subunits composed of two heptameric rings stacked back-to-back. Interacts with the co-chaperonin GroES.

The protein resides in the cytoplasm. It catalyses the reaction ATP + H2O + a folded polypeptide = ADP + phosphate + an unfolded polypeptide.. Functionally, together with its co-chaperonin GroES, plays an essential role in assisting protein folding. The GroEL-GroES system forms a nano-cage that allows encapsulation of the non-native substrate proteins and provides a physical environment optimized to promote and accelerate protein folding. The polypeptide is Chaperonin GroEL (Thioalkalivibrio sulfidiphilus (strain HL-EbGR7)).